The sequence spans 465 residues: Cytochrome c peroxidase Ccp (465 aa).

Residues 1-6 (MKMVSR) are Cytoplasmic-facing. Residues 7–27 (ITAIGLAGVAICYLGLSGYVW) form a helical membrane-spanning segment. Residues 28 to 465 (YHDNKRSKQA…VYTPYMQDKQ (438 aa)) lie on the Periplasmic side of the membrane. 3 Cytochrome c domains span residues 42–155 (SAVS…AKQR), 185–287 (QKVA…EKDP), and 337–454 (AQQK…HSLN). The heme c site is built by C59, C62, H63, M125, C207, C210, H211, C351, C354, H355, and M429.

As to quaternary structure, the recombinant enzyme lacking its transmembrane domain is a monomer in solution. The cofactor is heme c.

It localises to the cell inner membrane. Does not require reductive activation for maximum activity, as peroxidatic heme is high-spin His/OH(-) 6-coordinated. Calcium ions are needed to attain maximum peroxidase activity. Functionally, cytochrome peroxidase that enables anaerobic respiration with H(2)O(2) as a terminal electron acceptor. It receives electrons from the quinol pool. Menaquinol is probably the electron donor in vivo. It can use menadiol (a menaquinol analog), hydroquinone, duroquinol and the artificial electron donor ABTS(2-) in vitro, but only menadiol and hydroquinone can efficiently transfer electrons to Ccp, maintaining the catalytic activity of the enzyme. It enables E.coli to grow on a nonfermentable carbon source when H(2)O(2) is supplied. Plays a role in the peroxide stress response under anaerobic conditions. However, it does not degrade H(2)O(2) quickly enough to lower the periplasmic H(2)O(2) level below that of the surrounding medium and protect the cell from its toxic effects. The protein is Cytochrome c peroxidase Ccp of Escherichia coli (strain K12).